Consider the following 472-residue polypeptide: MDALLTSPFIPLKKPSHNRKSNTTTASSSSSSFLQLIPQTKKETLDFDLPRYNTLISPTLDLAVVGGGPAGLAVAKRVSDAGLSVCSIDPYPNLVWPNNYGVWVDEFAAMDLLDCIDASWNSASVFIDDNNRKLLSRPYARVDRRRLKSRLLNAYLSNGVRFHQSKVLNVVHEEAKSVLLCSDGTRIPAAVVLDATGFSRCLVQYQQPYNPGYQVAYGILAEVEEHPFELDQMVFMDWRDSHLGFRPELKKRNDGLPTFLYAMPFSSDLIFLEETSLVARPGLLIEDIQERMIERLRHLGIRIKRIEEDERCVIPMGGPLPVLPQRVLGIGGTAGMVHPSTGYMVARTLAAAPIVADAIVGYIGGSGAEVSARVWKDLWPIERRRQREFFCFGMDVLLKLDLEGTRRFFDAFFGLEERYWHGFLSSRLFLPELVGFGFSLFGRASAGCRLEIMAKGTVPLIKMIRNLLKDLE.

The N-terminal 25 residues, 1–25, are a transit peptide targeting the chloroplast; it reads MDALLTSPFIPLKKPSHNRKSNTTT. A disordered region spans residues 1–27; the sequence is MDALLTSPFIPLKKPSHNRKSNTTTAS. Residue 62 to 90 participates in NAD(+) binding; sequence LAVVGGGPAGLAVAKRVSDAGLSVCSIDP.

It belongs to the lycopene cyclase family. As to expression, expressed in flower buds and lips. Detected in roots and leaves.

It is found in the plastid. The protein localises to the chloroplast. The enzyme catalyses a carotenoid psi-end group = a carotenoid beta-end derivative. It functions in the pathway carotenoid biosynthesis; beta-carotene biosynthesis. The protein operates within carotenoid biosynthesis; beta-zeacarotene biosynthesis. In terms of biological role, catalyzes the double cyclization reaction which converts lycopene to beta-carotene and neurosporene to beta-zeacarotene. This is Lycopene beta cyclase, chloroplastic (LCY-B) from Oncidium hybrid cultivar (Orchid).